We begin with the raw amino-acid sequence, 875 residues long: MSLNNITFCVSQDLDVPLKVKIKSLEGHKPLLKPSQKILNPELMLIGSNVFPSSDLIVSLQVFDKERNRNLTLPIYTPYIPFRNSRTWDYWLTLPIRIKQLTFSSHLRIILWEYNGSKQIPFFNLETSIFNLKDCTLKRGFESLKFRYDVIDHCEVVTDNKDQENLNKYFQGEFTRLPWLDEITISKLRKQRENRTWPQGTFVLNLEFPMLELPVVFIEREIMNTQMNIPTLKNNPGLSTDLREPNRNDPQIKISLGDKYHSTLKFYDPDQPNNDPIEEKYRRLERASKNANLDKQVKPDIKKRDYLNKIINYPPGTKLTAHEKGSIWKYRYYLMNNKKALTKLLQSTNLREESERVEVLELMDSWAEIDIDDALELLGSTFKNLSVRSYAVNRLKKASDKELELYLLQLVEAVCFENLSTFSDKSNSEFTIVDAVSSQKLSGDSMLLSTSHANQKLLKSISSESETSGTESLPIVISPLAEFLIRRALVNPRLGSFFYWYLKSESEDKPYLDQILSSFWSRLDKKSRNILNDQVRLINVLRECCETIKRLKDTTAKKMELLVHLLETKVRPLVKVRPIALPLDPDVLICDVCPETSKVFKSSLSPLKITFKTTLNQPYHLMFKVGDDLRQDQLVVQIISLMNELLKNENVDLKLTPYKILATGPQEGAIEFIPNDTLASILSKYHGILGYLKLHYPDENATLGVQGWVLDNFVKSCAGYCVITYILGVGDRHLDNLLVTPDGHFFHADFGYILGQDPKPFPPLMKLPPQIIEAFGGAESSNYDKFRSYCFVAYSILRRNAGLILNLFELMKTSNIPDIRIDPNGAILRVRERFNLNMSEEDATVHFQNLINDSVNALLPIVIDHLHNLAQYWRT.

One can recognise a C2 PI3K-type domain in the interval Leu-14–Leu-188. A PIK helical domain is found at Leu-293–Lys-526. One can recognise a PI3K/PI4K catalytic domain in the interval Cys-593 to Leu-859. A G-loop region spans residues Val-599–Ser-605. A catalytic loop region spans residues Gly-728–Asn-736. Residues His-747–Pro-768 form an activation loop region.

Belongs to the PI3/PI4-kinase family. Component of the autophagy-specific VPS34 PI3-kinase complex I composed of VPS15, VPS30, VPS34, ATG14 and ATG38, and of the VPS34 PI3-kinase complex II composed of VPS15, VPS30, VPS34 and VPS38. Interacts directly with ATG38. Interacts directly with VPS34. Post-translationally, autophosphorylated. Might also be phosphorylated by VPS15.

The protein resides in the golgi apparatus. The protein localises to the trans-Golgi network membrane. It is found in the endosome membrane. The enzyme catalyses a 1,2-diacyl-sn-glycero-3-phospho-(1D-myo-inositol) + ATP = a 1,2-diacyl-sn-glycero-3-phospho-(1D-myo-inositol-3-phosphate) + ADP + H(+). Phosphatidylinositol 3-kinase activity is directly dependent on VPS15 protein kinase activity. Its function is as follows. Phosphatidylinositol 3-kinase required for cytoplasm to vacuole transport (Cvt) and autophagy as a part of the autophagy-specific VPS34 PI3-kinase complex I. This complex is essential to recruit the ATG8-phosphatidylinositol conjugate and the ATG12-ATG5 conjugate to the pre-autophagosomal structure. Also involved in endosome-to-Golgi retrograde transport as part of the VPS34 PI3-kinase complex II. This second complex is required for the endosome-to-Golgi retrieval of PEP1 and KEX2, and the recruitment of VPS5 and VPS7, two components of the retromer complex, to endosomal membranes (probably through the synthesis of a specific pool of phosphatidylinositol 3-phosphate recruiting the retromer to the endosomes). Its activation by VPS15 may lead to the phosphorylation of phosphatidylinositol in the sorting compartment membrane. Finally, it might also be involved in ethanol tolerance and cell wall integrity. The chain is Phosphatidylinositol 3-kinase VPS34 (VPS34) from Saccharomyces cerevisiae (strain ATCC 204508 / S288c) (Baker's yeast).